Reading from the N-terminus, the 294-residue chain is Ribosomal RNA small subunit methyltransferase A (294 aa).

Positions 29, 31, 56, 77, 107, and 126 each coordinate S-adenosyl-L-methionine.

This sequence belongs to the class I-like SAM-binding methyltransferase superfamily. rRNA adenine N(6)-methyltransferase family. RsmA subfamily.

It is found in the cytoplasm. The enzyme catalyses adenosine(1518)/adenosine(1519) in 16S rRNA + 4 S-adenosyl-L-methionine = N(6)-dimethyladenosine(1518)/N(6)-dimethyladenosine(1519) in 16S rRNA + 4 S-adenosyl-L-homocysteine + 4 H(+). In terms of biological role, specifically dimethylates two adjacent adenosines (A1518 and A1519) in the loop of a conserved hairpin near the 3'-end of 16S rRNA in the 30S particle. May play a critical role in biogenesis of 30S subunits. The protein is Ribosomal RNA small subunit methyltransferase A of Mycobacterium sp. (strain JLS).